The primary structure comprises 679 residues: Pollen receptor-like kinase 4 (679 aa).

The signal sequence occupies residues 1-39 (MLTWETPVMLASNTASTKKLAFITTFLIIVLCPVTMVMS). LRR repeat units follow at residues 118-141 (IKNL…VKNF), 142-165 (GALK…AFDG), 167-191 (HHLK…AYLP), 193-217 (LLEL…DLKL), and 234-257 (SNMD…PCSS). The span at 252–269 (LSPCSSDSGSSPDLPSSP) shows a compositional bias: low complexity. The disordered stretch occupies residues 252-271 (LSPCSSDSGSSPDLPSSPTE). A helical transmembrane segment spans residues 278–298 (FFIIAIVLIVIGIILMIISLV). The interval 311–344 (SAYPSAGQDRTEKYNYDQSTDKDKAADSVTSYTS) is disordered. Positions 319-336 (DRTEKYNYDQSTDKDKAA) are enriched in basic and acidic residues. The 275-residue stretch at 372–646 (RASAEVLGSG…RDAVEKIERL (275 aa)) folds into the Protein kinase domain. Serine 374 carries the phosphoserine modification. ATP contacts are provided by residues 378–386 (LGSGSFGSS) and lysine 400. Phosphoserine occurs at positions 452 and 455. Threonine 472 carries the post-translational modification Phosphothreonine. Phosphotyrosine is present on tyrosine 542.

This sequence belongs to the protein kinase superfamily. Ser/Thr protein kinase family. In terms of assembly, interacts in vitro with ROPGEF1 (via PRONE domain). Interacts weakly with the GRI peptide. In terms of tissue distribution, expressed in pollen and/or in flowers, but not in leaves.

It localises to the membrane. It carries out the reaction L-seryl-[protein] + ATP = O-phospho-L-seryl-[protein] + ADP + H(+). The enzyme catalyses L-threonyl-[protein] + ATP = O-phospho-L-threonyl-[protein] + ADP + H(+). Functionally, receptor-like kinase involved in the control of pollen germination and pollen tube polar growth. Can phosphorylate ROPGEF1 in vitro. The sequence is that of Pollen receptor-like kinase 4 from Arabidopsis thaliana (Mouse-ear cress).